Here is a 137-residue protein sequence, read N- to C-terminus: Small ribosomal subunit protein uS9 (137 aa).

Basic and acidic residues predominate over residues 105–117 (LKVEGYLTRDPRA). The tract at residues 105–137 (LKVEGYLTRDPRAKERKKYGLRKARKAPQYSKR) is disordered. Over residues 118–137 (KERKKYGLRKARKAPQYSKR) the composition is skewed to basic residues.

This sequence belongs to the universal ribosomal protein uS9 family.

The polypeptide is Small ribosomal subunit protein uS9 (Cyanothece sp. (strain PCC 7425 / ATCC 29141)).